The following is a 546-amino-acid chain: Chaperonin GroEL (546 aa).

ATP contacts are provided by residues 30 to 33 (TMGP), lysine 51, 87 to 91 (DGTTT), glycine 415, 478 to 480 (NAA), and aspartate 494.

The protein belongs to the chaperonin (HSP60) family. Forms a cylinder of 14 subunits composed of two heptameric rings stacked back-to-back. Interacts with the co-chaperonin GroES.

The protein resides in the cytoplasm. It catalyses the reaction ATP + H2O + a folded polypeptide = ADP + phosphate + an unfolded polypeptide.. Its function is as follows. Together with its co-chaperonin GroES, plays an essential role in assisting protein folding. The GroEL-GroES system forms a nano-cage that allows encapsulation of the non-native substrate proteins and provides a physical environment optimized to promote and accelerate protein folding. This Wolinella succinogenes (strain ATCC 29543 / DSM 1740 / CCUG 13145 / JCM 31913 / LMG 7466 / NCTC 11488 / FDC 602W) (Vibrio succinogenes) protein is Chaperonin GroEL.